The chain runs to 440 residues: Chromosome partition protein MukF (440 aa).

Residues 208–236 (LSETSGTLRELQDTLEAAGDKLQANLLRI) are leucine-zipper.

Belongs to the MukF family. In terms of assembly, interacts, and probably forms a ternary complex, with MukE and MukB via its C-terminal region. The complex formation is stimulated by calcium or magnesium. It is required for an interaction between MukE and MukB.

Its subcellular location is the cytoplasm. The protein localises to the nucleoid. Its function is as follows. Involved in chromosome condensation, segregation and cell cycle progression. May participate in facilitating chromosome segregation by condensation DNA from both sides of a centrally located replisome during cell division. Not required for mini-F plasmid partitioning. Probably acts via its interaction with MukB and MukE. Overexpression results in anucleate cells. It has a calcium binding activity. The protein is Chromosome partition protein MukF of Escherichia coli (strain UTI89 / UPEC).